The sequence spans 86 residues: Small ribosomal subunit protein uS15c (86 aa).

It belongs to the universal ribosomal protein uS15 family. As to quaternary structure, part of the 30S ribosomal subunit.

It localises to the plastid. The protein resides in the chloroplast. This Cryptomeria japonica (Japanese cedar) protein is Small ribosomal subunit protein uS15c (rps15).